Consider the following 3573-residue polypeptide: Zinc finger homeobox protein 4 (3573 aa).

The span at 1–28 shows a compositional bias: polar residues; sequence METCDSPTISRQENGQSTSKLCGTTQLD. Disordered regions lie at residues 1–54, 425–479, and 522–606; these read METC…LRTD, LSHS…DTYS, and TSSS…GSPG. 2 stretches are compositionally biased toward basic and acidic residues: residues 39–54 and 434–452; these read EPDR…LRTD and KLSE…KETN. A compositionally biased stretch (acidic residues) spans 468-479; sequence EPVEEEDEDTYS. Over residues 585-599 the composition is skewed to polar residues; it reads SVTPHQHSFTPSTPS. 3 consecutive C2H2-type zinc fingers follow at residues 609–632, 640–663, and 695–719; these read IECP…TMMH, LKCP…KEKH, and FRCE…SDKH. The C2H2-type 4; degenerate zinc-finger motif lies at 763 to 785; that stretch reads WRCEVCDYETNVARNLRIHMTSE. C2H2-type zinc fingers lie at residues 913-937, 969-991, and 1017-1041; these read YQCK…TDKH, LKCN…TTNH, and YYCA…SVKH. Positions 1096–1132 are disordered; it reads GEDTEGSAKSTSVAIGDDKDSSERDNTEAKKSSKDSV. The segment covering 1111–1129 has biased composition (basic and acidic residues); the sequence is GDDKDSSERDNTEAKKSSK. C2H2-type zinc fingers lie at residues 1168-1191 and 1197-1220; these read YQCP…LSQH and ICCP…THLH. The tract at residues 1250–1340 is disordered; the sequence is AASEKSERDT…EQQKKQQLSV (91 aa). The span at 1277 to 1306 shows a compositional bias: basic and acidic residues; it reads VDEKSTPGTDESKPGMEIKSEEQKPPKESA. Positions 1322-1340 are enriched in polar residues; it reads TDSMPDQLNEQQKKQQLSV. 2 consecutive C2H2-type zinc fingers follow at residues 1348–1370 and 1376–1399; these read YRCN…SQYH and TMCS…EAGH. A disordered region spans residues 1442 to 1476; it reads YEMEQEGKASPVGSDSSSIPDDMGSEPKRTLPFRK. C2H2-type zinc fingers lie at residues 1492-1518 and 1544-1568; these read YKCT…SHLH and YKCS…SVLH. 2 disordered regions span residues 1577–1596 and 1795–1843; these read LEPS…VNSP and YKES…IASG. Low complexity predominate over residues 1580 to 1596; sequence SGNISSGNSVAGNVNSP. The segment covering 1795-1830 has biased composition (basic and acidic residues); it reads YKESEEISEKQEKPKQEFTNESEGLKENKDMKKPKS. The C2H2-type 14 zinc finger occupies 1886–1909; sequence LECGTCSKLFSNILILKSHQEHVH. A disordered region spans residues 1933 to 2013; the sequence is YPISPSSPET…PSAPPQVQLP (81 aa). 2 stretches are compositionally biased toward pro residues: residues 1940–1962 and 1980–2007; these read PETP…PTPS and LQAP…PSAP. 2 consecutive DNA-binding regions (homeobox) follow at residues 2072-2131 and 2169-2228; these read FKRP…RQRN and KRSS…RKSY. The C2H2-type 15; degenerate zinc finger occupies 2255–2279; sequence YQCKKCSVVFPRIFDLITHQKKQCY. Disordered stretches follow at residues 2278–2300 and 2318–2426; these read CYKD…DASD and SLAV…TPLQ. Residues 2281–2297 show a composition bias toward acidic residues; it reads DEDDDAQDESQTEDSMD. The segment covering 2318-2334 has biased composition (low complexity); it reads SLAVTAASSGSGSSTPL. Residues 2340 to 2357 are compositionally biased toward basic and acidic residues; the sequence is PEPEKASPKSESTEKPKP. Composition is skewed to low complexity over residues 2360-2373 and 2382-2413; these read TISK…QSSK and PSDP…TTPV. Residues 2436-2458 form a C2H2-type 16 zinc finger; sequence YQCDQCTVAFPTLELWQEHQHMH. Polar residues predominate over residues 2499–2509; it reads LAQMPPQTGSS. Residues 2499–2553 are disordered; it reads LAQMPPQTGSSHAAHPATVSGSMKRKLDDKEDNNCSEKEGGNSGEDQHRDKRLRT. Residues 2523–2547 show a composition bias toward basic and acidic residues; sequence RKLDDKEDNNCSEKEGGNSGEDQHR. A DNA-binding region (homeobox 3) is located at residues 2548–2607; that stretch reads DKRLRTTITPEQLEILYEKYLLDSNPTRKMLDHIAREVGLKKRVVQVWFQNTRARERKGQ. A C2H2-type 17 zinc finger spans residues 2618-2641; the sequence is KRCPFCRALFKAKSALESHIRSRH. 2 disordered regions span residues 2704-2788 and 2820-2875; these read EMSP…PKPL and FSEK…PGHK. 2 stretches are compositionally biased toward polar residues: residues 2709–2718 and 2746–2773; these read NLLSPSSFKA and TSSI…TGSS. A compositionally biased stretch (basic and acidic residues) spans 2820–2829; the sequence is FSEKDGDHDQ. The homeobox 4 DNA-binding region spans 2874 to 2933; that stretch reads HKRFRTQMSNLQLKVLKACFSDYRTPTMQECEMLGNEIGLPKRVVQVWFQNARAKEKKFK. A C2H2-type 18; degenerate zinc finger spans residues 2952 to 2976; sequence PECSLCGVKYSARLSIRDHIFSKQH. Disordered regions lie at residues 3060–3174 and 3287–3343; these read PSSL…KHLK and LQKQ…LDSK. Positions 3084-3104 are enriched in low complexity; the sequence is PTSATSSPALSLSSAPSKPLL. Over residues 3105 to 3129 the composition is skewed to pro residues; that stretch reads QTPPPPPPPPPPPPPPPPPPPPPPS. Basic and acidic residues predominate over residues 3159–3174; sequence IKEEELEANKPEKHLK. The stretch at 3271–3316 forms a coiled coil; it reads ALLQQYQQYQQNLQDSLQKQQKQQQEQQQKQVQAKSSKAENDQQQN. Residues 3287 to 3305 show a composition bias toward low complexity; that stretch reads LQKQQKQQQEQQQKQVQAK. Over residues 3321-3343 the composition is skewed to basic and acidic residues; it reads SETKEDRSSATESTKEEPQLDSK. The C2H2-type 19; degenerate zinc finger occupies 3360–3384; sequence FICRKCQMMFTDEDAAVNHQKSFCY. The segment at 3404–3428 adopts a C2H2-type 20 zinc-finger fold; it reads YQCLACDVAISGNEALSQHLQSSLH. Disordered regions lie at residues 3449–3468 and 3518–3543; these read HSVC…AASS and TSGV…QKLE. Low complexity predominate over residues 3453 to 3468; it reads SPNPNTTSTSQSAASS.

This sequence belongs to the krueppel C2H2-type zinc-finger protein family.

Its subcellular location is the nucleus. Its function is as follows. May play a role in neural and muscle differentiation. May be involved in transcriptional regulation. In Gallus gallus (Chicken), this protein is Zinc finger homeobox protein 4 (ZFHX4).